The sequence spans 178 residues: FXYD domain-containing ion transport regulator 5 (178 aa).

The signal sequence occupies residues 1–21 (MSPPSQLCLLTIVALILPSEG). The tract at residues 21–126 (GQTPEKPRSS…YMPPSYIENP (106 aa)) is disordered. Topologically, residues 22-146 (QTPEKPRSSF…YDNTTLRKRG (125 aa)) are extracellular. Polar residues predominate over residues 29–58 (SSFTAHQSSVTTHVPVPDQTSPGVQTTPPI). A compositionally biased stretch (low complexity) spans 70–79 (QTAAKTKTQQ). A helical transmembrane segment spans residues 147-164 (LLVAAVLFITGIIILTSG). The Cytoplasmic portion of the chain corresponds to 165–178 (KCRQFSQLCLNRHR).

The protein belongs to the FXYD family. In terms of assembly, regulatory subunit of the sodium/potassium-transporting ATPase which is composed of a catalytic alpha subunit, a non-catalytic beta subunit and an additional regulatory subunit. The regulatory subunit, a member of the FXYD protein family, modulates the enzymatic activity in a tissue- and isoform-specific way by changing affinities of the Na+/K+-ATPase toward Na(+), K(+) or ATP. In terms of processing, glycosylated. As to expression, spleen, lung, skeletal muscle, and testis.

It localises to the cell membrane. The protein localises to the basolateral cell membrane. Associates with and regulates the activity of the sodium/potassium-transporting ATPase (NKA) which catalyzes the hydrolysis of ATP coupled with the exchange of Na(+) and K(+) ions across the plasma membrane. May increase NKA activity by increasing the apparent affinity for Na(+). Involved in down-regulation of E-cadherin which results in reduced cell adhesion. Promotes metastasis. The protein is FXYD domain-containing ion transport regulator 5 (Fxyd5) of Rattus norvegicus (Rat).